We begin with the raw amino-acid sequence, 368 residues long: Ubiquitin domain-containing protein UBFD1 (368 aa).

The disordered stretch occupies residues 106–139; it reads SCDARGNLQPAPAQPPGDPAAQASVSNGEDAGGG. The region spanning 143–218 is the Ubiquitin-like domain; the sequence is ELVDLKIIWN…IMVVGSTIND (76 aa). Positions 231–263 are disordered; sequence QDAKAEENKKEPLCRQKQHRKVLDKGKPEDVMP. Basic and acidic residues-rich tracts occupy residues 233-244 and 251-260; these read AKAEENKKEPLC and KVLDKGKPED.

In Mus musculus (Mouse), this protein is Ubiquitin domain-containing protein UBFD1 (Ubfd1).